A 562-amino-acid chain; its full sequence is Methionine--tRNA ligase, mitochondrial (562 aa).

Residues 1–10 constitute a mitochondrion transit peptide; the sequence is MLRSLALRTF. The short motif at 43-53 is the 'HIGH' region element; that stretch reads FYVNAAPHLGH. The 'KMSKS' region motif lies at 332 to 336; sequence KMSKS. Lysine 335 serves as a coordination point for ATP.

The protein belongs to the class-I aminoacyl-tRNA synthetase family.

It is found in the mitochondrion matrix. The enzyme catalyses tRNA(Met) + L-methionine + ATP = L-methionyl-tRNA(Met) + AMP + diphosphate. The sequence is that of Methionine--tRNA ligase, mitochondrial (mars2) from Xenopus laevis (African clawed frog).